The chain runs to 159 residues: D-aminoacyl-tRNA deacylase (159 aa).

Residues 146 to 147 carry the Gly-cisPro motif, important for rejection of L-amino acids motif; that stretch reads GP.

This sequence belongs to the DTD family. Homodimer.

It is found in the cytoplasm. The enzyme catalyses glycyl-tRNA(Ala) + H2O = tRNA(Ala) + glycine + H(+). It carries out the reaction a D-aminoacyl-tRNA + H2O = a tRNA + a D-alpha-amino acid + H(+). Its function is as follows. An aminoacyl-tRNA editing enzyme that deacylates mischarged D-aminoacyl-tRNAs. Also deacylates mischarged glycyl-tRNA(Ala), protecting cells against glycine mischarging by AlaRS. Acts via tRNA-based rather than protein-based catalysis; rejects L-amino acids rather than detecting D-amino acids in the active site. By recycling D-aminoacyl-tRNA to D-amino acids and free tRNA molecules, this enzyme counteracts the toxicity associated with the formation of D-aminoacyl-tRNA entities in vivo and helps enforce protein L-homochirality. In Bifidobacterium adolescentis (strain ATCC 15703 / DSM 20083 / NCTC 11814 / E194a), this protein is D-aminoacyl-tRNA deacylase.